A 1408-amino-acid chain; its full sequence is DNA-directed RNA polymerase subunit beta'' (1408 aa).

The protein belongs to the RNA polymerase beta' chain family. RpoC2 subfamily. In terms of assembly, in plastids the minimal PEP RNA polymerase catalytic core is composed of four subunits: alpha, beta, beta', and beta''. When a (nuclear-encoded) sigma factor is associated with the core the holoenzyme is formed, which can initiate transcription.

The protein resides in the plastid. It is found in the chloroplast. The enzyme catalyses RNA(n) + a ribonucleoside 5'-triphosphate = RNA(n+1) + diphosphate. Functionally, DNA-dependent RNA polymerase catalyzes the transcription of DNA into RNA using the four ribonucleoside triphosphates as substrates. This chain is DNA-directed RNA polymerase subunit beta'', found in Psilotum nudum (Whisk fern).